The sequence spans 146 residues: Hemoglobin subunit beta (146 aa).

At Val-1 the chain carries N-acetylvaline. Residues 2–146 (HLTAEEKSAV…VANALAHKYH (145 aa)) form the Globin domain. Thr-12 is modified (phosphothreonine). Residue Lys-59 is modified to N6-acetyllysine. His-63 serves as a coordination point for heme b. Lys-82 carries the post-translational modification N6-acetyllysine. His-92 is a binding site for heme b. Residue Cys-93 is modified to S-nitrosocysteine. Lys-144 is subject to N6-acetyllysine.

It belongs to the globin family. As to quaternary structure, heterotetramer of two alpha chains and two beta chains. In terms of tissue distribution, red blood cells.

Involved in oxygen transport from the lung to the various peripheral tissues. The protein is Hemoglobin subunit beta (HBB) of Balaenoptera acutorostrata (Common minke whale).